The primary structure comprises 308 residues: Olfactory receptor 2D2 (308 aa).

At 1 to 25 the chain is on the extracellular side; it reads MRQINQTQVTEFLLLGLSDGPHTEQ. Asparagine 5 carries N-linked (GlcNAc...) asparagine glycosylation. The chain crosses the membrane as a helical span at residues 26–49; that stretch reads LLFIVLLGVYLVTVLGNLLLISLV. Residues 50–57 are Cytoplasmic-facing; the sequence is HVDSQLHT. The helical transmembrane segment at 58–79 threads the bilayer; that stretch reads PMYFFLCNLSLADLCFSTNIVP. The Extracellular segment spans residues 80 to 100; the sequence is QALVHLLSRKKVIAFTLCAAR. Residues 101 to 120 traverse the membrane as a helical segment; that stretch reads LLFFLIFGCTQCALLAVMSY. Residues 121–139 are Cytoplasmic-facing; sequence DRYVAICNPLRYPNIMTWK. A helical transmembrane segment spans residues 140 to 158; sequence VCVQLATGSWTSGILVSVV. Over 159–195 the chain is Extracellular; it reads DTTFILRLPYRGSNSIAHFFCEAPALLILASTDTHAS. Residues 196 to 219 traverse the membrane as a helical segment; sequence EMAIFLMGVVILLIPVFLILVSYG. The Cytoplasmic portion of the chain corresponds to 220-236; that stretch reads RIIVTVVKMKSTVGSLK. Residues 237-259 form a helical membrane-spanning segment; that stretch reads AFSTCGSHLMVVILFYGSAIITY. Residues 260 to 270 lie on the Extracellular side of the membrane; that stretch reads MTPKSSKQQEK. The helical transmembrane segment at 271–290 threads the bilayer; sequence SVSVFYAIVTPMLNPLIYSL. Over 291–308 the chain is Cytoplasmic; sequence RNKDVKAALRKVATRNFP.

This sequence belongs to the G-protein coupled receptor 1 family.

It is found in the cell membrane. In terms of biological role, odorant receptor. This is Olfactory receptor 2D2 (OR2D2) from Homo sapiens (Human).